We begin with the raw amino-acid sequence, 280 residues long: Energy-coupling factor transporter ATP-binding protein EcfA2 (280 aa).

The ABC transporter domain occupies 3-245 (INLQNVSYTY…VSLLEKKQLG (243 aa)). Residue 40 to 47 (GHTGSGKS) coordinates ATP.

Belongs to the ABC transporter superfamily. Energy-coupling factor EcfA family. As to quaternary structure, forms a stable energy-coupling factor (ECF) transporter complex composed of 2 membrane-embedded substrate-binding proteins (S component), 2 ATP-binding proteins (A component) and 2 transmembrane proteins (T component).

Its subcellular location is the cell membrane. ATP-binding (A) component of a common energy-coupling factor (ECF) ABC-transporter complex. Unlike classic ABC transporters this ECF transporter provides the energy necessary to transport a number of different substrates. This Streptococcus pyogenes serotype M1 protein is Energy-coupling factor transporter ATP-binding protein EcfA2.